The sequence spans 410 residues: Multifunctional CCA protein (410 aa).

ATP-binding residues include G8 and R11. 2 residues coordinate CTP: G8 and R11. Residues D21 and D23 each contribute to the Mg(2+) site. ATP contacts are provided by R91, R137, and R140. R91, R137, and R140 together coordinate CTP. Positions 225-326 (SGIHTLMTLQ…LNVLKKTDAF (102 aa)) constitute an HD domain.

Belongs to the tRNA nucleotidyltransferase/poly(A) polymerase family. Bacterial CCA-adding enzyme type 1 subfamily. Monomer. Can also form homodimers and oligomers. Mg(2+) is required as a cofactor. Requires Ni(2+) as cofactor.

It catalyses the reaction a tRNA precursor + 2 CTP + ATP = a tRNA with a 3' CCA end + 3 diphosphate. The catalysed reaction is a tRNA with a 3' CCA end + 2 CTP + ATP = a tRNA with a 3' CCACCA end + 3 diphosphate. Its function is as follows. Catalyzes the addition and repair of the essential 3'-terminal CCA sequence in tRNAs without using a nucleic acid template. Adds these three nucleotides in the order of C, C, and A to the tRNA nucleotide-73, using CTP and ATP as substrates and producing inorganic pyrophosphate. tRNA 3'-terminal CCA addition is required both for tRNA processing and repair. Also involved in tRNA surveillance by mediating tandem CCA addition to generate a CCACCA at the 3' terminus of unstable tRNAs. While stable tRNAs receive only 3'-terminal CCA, unstable tRNAs are marked with CCACCA and rapidly degraded. This is Multifunctional CCA protein from Neisseria gonorrhoeae (strain ATCC 700825 / FA 1090).